We begin with the raw amino-acid sequence, 250 residues long: Pyridoxine 5'-phosphate synthase (250 aa).

Asn11 contacts 3-amino-2-oxopropyl phosphate. 13-14 (DH) lines the 1-deoxy-D-xylulose 5-phosphate pocket. Arg22 contributes to the 3-amino-2-oxopropyl phosphate binding site. His47 acts as the Proton acceptor in catalysis. 1-deoxy-D-xylulose 5-phosphate-binding residues include Arg49 and His54. Glu74 serves as the catalytic Proton acceptor. Thr104 contributes to the 1-deoxy-D-xylulose 5-phosphate binding site. The active-site Proton donor is His198. Residues Gly199 and 220 to 221 (GY) contribute to the 3-amino-2-oxopropyl phosphate site.

Belongs to the PNP synthase family. As to quaternary structure, homooctamer; tetramer of dimers.

Its subcellular location is the cytoplasm. It catalyses the reaction 3-amino-2-oxopropyl phosphate + 1-deoxy-D-xylulose 5-phosphate = pyridoxine 5'-phosphate + phosphate + 2 H2O + H(+). Its pathway is cofactor biosynthesis; pyridoxine 5'-phosphate biosynthesis; pyridoxine 5'-phosphate from D-erythrose 4-phosphate: step 5/5. Catalyzes the complicated ring closure reaction between the two acyclic compounds 1-deoxy-D-xylulose-5-phosphate (DXP) and 3-amino-2-oxopropyl phosphate (1-amino-acetone-3-phosphate or AAP) to form pyridoxine 5'-phosphate (PNP) and inorganic phosphate. The protein is Pyridoxine 5'-phosphate synthase of Bradyrhizobium diazoefficiens (strain JCM 10833 / BCRC 13528 / IAM 13628 / NBRC 14792 / USDA 110).